The chain runs to 602 residues: MEHNKVDTEPQDSYDDQQKWVLDSSTDSRGEIPLRAQTGAWRAALFIIGIEFSERLSYFGISTNLVVYLTTILHQDLKMAVKNTNYWSGVTTLMPLLGGFVADAYLGRYGTVLLATTIYLMGLILLTLSWFIPGLKACHEDMCVEPRKAHEIAFFIAIYLISIGTGGHKPSLESFGADQFEDGHPEERKMKMSYFNWWNAGLCAGILTAVTVIVYIEDRIGWGVASIILTIVMATSFFIFRIGKPFYRYRAPSGSPLTPMLQVFVAAIAKRNLPCPSDSSLLHELTNEEYTKGRLLSSSKNLKFLDKAAVIEDRNENTKAEKQSPWRLATVTKVEEVKLLINMIPIWFFTLAFGVCATQSSTLFIKQAIIMDRHITGTSFIVPPASLFSLIALSIIITVTIYEKLLVPLLRRATGNERGISILQRIGVGMVFSLFAMIIAALIEKKRLDYAKEHHMNKTMTLSAIWLAPQFLVLGVADAFTLVGLQEYFYDQVPDSMRSLGIAFYLSVLGAASFVNNLLITVSDHLAEEISGKGWFGKDLNSSRLDRFYWMLAALTAANICCFVIVAMRYTYKTVQPSLAVVADGGDDVETATGTNNTSKFT.

2 consecutive transmembrane segments (helical) span residues Leu-56–Leu-73 and Trp-87–Gly-107. A Phosphothreonine modification is found at Thr-111. 10 helical membrane-spanning segments follow: residues Val-112–Ile-132, Ile-152–Leu-172, Trp-197–Glu-217, Ile-220–Phe-240, Val-337–Ala-357, Ile-381–Ile-401, Ile-422–Leu-442, Ile-465–Leu-485, Leu-500–Ile-520, and Phe-548–Met-568.

This sequence belongs to the major facilitator superfamily. Proton-dependent oligopeptide transporter (POT/PTR) (TC 2.A.17) family. Expressed in shoots, stems, leaves and flowers.

The protein localises to the membrane. This Arabidopsis thaliana (Mouse-ear cress) protein is Protein NRT1/ PTR FAMILY 5.7 (NPF5.7).